Here is a 148-residue protein sequence, read N- to C-terminus: Putative transmembrane protein ORF23 (148 aa).

An N-terminal signal peptide occupies residues 1 to 18; that stretch reads MVIILLGVSIVVPGLFLA. Residues 19 to 118 lie on the Extracellular side of the membrane; the sequence is TETPQTNTFE…YVGWPSGAET (100 aa). The chain crosses the membrane as a helical span at residues 119–139; it reads IITNIADIIIMATAVMIIGAI. The Cytoplasmic portion of the chain corresponds to 140-148; that stretch reads YTGYKVSIK.

The protein resides in the host membrane. This chain is Putative transmembrane protein ORF23, found in His1 virus (isolate Australia/Victoria) (His1V).